The sequence spans 645 residues: Rho GTPase-activating protein 25 (645 aa).

The region spanning 46-151 (RPIKMGWLKK…WVKFLRRVAG (106 aa)) is the PH domain. Residues 159–353 (QRLDETVAYE…MMIRDHEVLF (195 aa)) enclose the Rho-GAP domain. Disordered stretches follow at residues 355–444 (KSKD…QTLP) and 469–550 (FWSP…EEEI). A phosphoserine mark is found at Ser362 and Ser395. A compositionally biased stretch (low complexity) spans 393 to 409 (TDSFSSMTSDSDTTSPT). A Phosphothreonine modification is found at Thr406. Positions 420 to 431 (DSSKVPREKPGD) are enriched in basic and acidic residues. The segment covering 487-504 (SQDLRQLSDSQRTSTYDN) has biased composition (polar residues). Phosphoserine is present on Ser536. Residues 541-644 (GKKNSGEEEI…VKSMKEPKTE (104 aa)) adopt a coiled-coil conformation.

GTPase activator for the Rho-type GTPases by converting them to an inactive GDP-bound state. This chain is Rho GTPase-activating protein 25 (ARHGAP25), found in Homo sapiens (Human).